The sequence spans 503 residues: ATP synthase subunit alpha (503 aa).

Position 170 to 177 (170 to 177) interacts with ATP; the sequence is GDRQTGKT.

It belongs to the ATPase alpha/beta chains family. F-type ATPases have 2 components, CF(1) - the catalytic core - and CF(0) - the membrane proton channel. CF(1) has five subunits: alpha(3), beta(3), gamma(1), delta(1), epsilon(1). CF(0) has three main subunits: a(1), b(2) and c(9-12). The alpha and beta chains form an alternating ring which encloses part of the gamma chain. CF(1) is attached to CF(0) by a central stalk formed by the gamma and epsilon chains, while a peripheral stalk is formed by the delta and b chains.

The protein resides in the cell inner membrane. It catalyses the reaction ATP + H2O + 4 H(+)(in) = ADP + phosphate + 5 H(+)(out). Produces ATP from ADP in the presence of a proton gradient across the membrane. The alpha chain is a regulatory subunit. In Geobacter metallireducens (strain ATCC 53774 / DSM 7210 / GS-15), this protein is ATP synthase subunit alpha.